The sequence spans 248 residues: 2,3-bisphosphoglycerate-dependent phosphoglycerate mutase (248 aa).

Substrate-binding positions include 8–15, 21–22, Arg-60, 87–90, Lys-98, 114–115, and 183–184; these read RHGESEWN, TG, ERHY, RR, and GN. The active-site Tele-phosphohistidine intermediate is the His-9. The active-site Proton donor/acceptor is the Glu-87.

This sequence belongs to the phosphoglycerate mutase family. BPG-dependent PGAM subfamily.

It carries out the reaction (2R)-2-phosphoglycerate = (2R)-3-phosphoglycerate. Its pathway is carbohydrate degradation; glycolysis; pyruvate from D-glyceraldehyde 3-phosphate: step 3/5. Catalyzes the interconversion of 2-phosphoglycerate and 3-phosphoglycerate. This is 2,3-bisphosphoglycerate-dependent phosphoglycerate mutase from Borrelia turicatae (strain 91E135).